Reading from the N-terminus, the 355-residue chain is DNA polymerase IV (355 aa).

The region spanning 6–187 is the UmuC domain; the sequence is IIHVDMDAFY…LPVGKIHGVG (182 aa). Mg(2+)-binding residues include D10 and D105. The active site involves E106.

Belongs to the DNA polymerase type-Y family. Monomer. The cofactor is Mg(2+).

It is found in the cytoplasm. The enzyme catalyses DNA(n) + a 2'-deoxyribonucleoside 5'-triphosphate = DNA(n+1) + diphosphate. Poorly processive, error-prone DNA polymerase involved in untargeted mutagenesis. Copies undamaged DNA at stalled replication forks, which arise in vivo from mismatched or misaligned primer ends. These misaligned primers can be extended by PolIV. Exhibits no 3'-5' exonuclease (proofreading) activity. May be involved in translesional synthesis, in conjunction with the beta clamp from PolIII. This chain is DNA polymerase IV, found in Alkalilimnicola ehrlichii (strain ATCC BAA-1101 / DSM 17681 / MLHE-1).